We begin with the raw amino-acid sequence, 329 residues long: Flotillin-like protein FloA (329 aa).

The chain crosses the membrane as a helical span at residues 4–24 (IWGFLILILVLIFLGVFFSFV).

This sequence belongs to the flotillin-like FloA family. As to quaternary structure, homooligomerizes.

The protein localises to the cell membrane. It is found in the membrane raft. Found in functional membrane microdomains (FMM) that may be equivalent to eukaryotic membrane rafts. FMMs are highly dynamic and increase in number as cells age. Flotillins are thought to be important factors in membrane fluidity. The sequence is that of Flotillin-like protein FloA from Dictyoglomus turgidum (strain DSM 6724 / Z-1310).